The sequence spans 1012 residues: DNA polymerase catalytic subunit (1012 aa).

Belongs to the DNA polymerase type-B family.

The protein resides in the host nucleus. It carries out the reaction DNA(n) + a 2'-deoxyribonucleoside 5'-triphosphate = DNA(n+1) + diphosphate. This chain is DNA polymerase catalytic subunit (U38), found in Human herpesvirus 6A (strain Uganda-1102) (HHV-6 variant A).